The primary structure comprises 171 residues: 3-hydroxydecanoyl-[acyl-carrier-protein] dehydratase (171 aa).

Residue H70 is part of the active site.

This sequence belongs to the thioester dehydratase family. FabA subfamily. In terms of assembly, homodimer.

It is found in the cytoplasm. It carries out the reaction a (3R)-hydroxyacyl-[ACP] = a (2E)-enoyl-[ACP] + H2O. The catalysed reaction is (3R)-hydroxydecanoyl-[ACP] = (2E)-decenoyl-[ACP] + H2O. The enzyme catalyses (2E)-decenoyl-[ACP] = (3Z)-decenoyl-[ACP]. The protein operates within lipid metabolism; fatty acid biosynthesis. Necessary for the introduction of cis unsaturation into fatty acids. Catalyzes the dehydration of (3R)-3-hydroxydecanoyl-ACP to E-(2)-decenoyl-ACP and then its isomerization to Z-(3)-decenoyl-ACP. Can catalyze the dehydratase reaction for beta-hydroxyacyl-ACPs with saturated chain lengths up to 16:0, being most active on intermediate chain length. The chain is 3-hydroxydecanoyl-[acyl-carrier-protein] dehydratase from Pseudoalteromonas translucida (strain TAC 125).